Consider the following 24-residue polypeptide: Brevinin-1Bf (24 aa).

C18 and C24 are joined by a disulfide.

Expressed by the skin glands.

The protein resides in the secreted. Functionally, antibacterial activity against Gram-positive bacterium S.aureus and Gram-negative bacterium E.coli. The sequence is that of Brevinin-1Bf from Lithobates berlandieri (Rio Grande leopard frog).